A 513-amino-acid polypeptide reads, in one-letter code: Noroxomaritidine synthase 1 (513 aa).

The chain crosses the membrane as a helical span at residues 18-34 (ILIAIACLVVFSLLRSA). Cysteine 458 is a binding site for heme.

The protein belongs to the cytochrome P450 family. It depends on heme as a cofactor. In terms of tissue distribution, mostly expressed in stems, and, to a lower extent, in bulbs, roots, leaves and flowers.

The protein resides in the membrane. The enzyme catalyses 4'-O-methylnorbelladine + reduced [NADPH--hemoprotein reductase] + O2 = (10bR,4aS)-noroxomaritidine + oxidized [NADPH--hemoprotein reductase] + 2 H2O + H(+). It catalyses the reaction 4'-O-methylnorbelladine + reduced [NADPH--hemoprotein reductase] + O2 = (10bS,4aR)-noroxomaritidine + oxidized [NADPH--hemoprotein reductase] + 2 H2O + H(+). It participates in alkaloid biosynthesis. Functionally, cytochrome P450 that catalyzes an intramolecular para-para' C-C phenol coupling of 4'-O-methylnorbelladine in alkaloids biosynthesis, including haemanthamine- and crinamine-type alkaloids, promising anticancer agents. Catalyzes the formation of (10bR,4aS)-noroxomaritidine and (10bS,4aR)-noroxomaritidine from 4'-O-methylnorbelladine. The protein is Noroxomaritidine synthase 1 of Narcissus pseudonarcissus (Daffodil).